A 187-amino-acid chain; its full sequence is Adenine phosphoribosyltransferase 1 (187 aa).

S68 bears the Phosphoserine mark. An AMP-binding site is contributed by 133–137 (ATGGS).

Belongs to the purine/pyrimidine phosphoribosyltransferase family. As to quaternary structure, homodimer. Mg(2+) serves as cofactor.

The protein localises to the cytoplasm. Its subcellular location is the nucleus. The catalysed reaction is AMP + diphosphate = 5-phospho-alpha-D-ribose 1-diphosphate + adenine. It functions in the pathway purine metabolism; AMP biosynthesis via salvage pathway; AMP from adenine: step 1/1. Functionally, catalyzes a salvage reaction resulting in the formation of AMP, that is energically less costly than de novo synthesis. This Saccharomyces cerevisiae (strain ATCC 204508 / S288c) (Baker's yeast) protein is Adenine phosphoribosyltransferase 1.